The following is a 321-amino-acid chain: uncharacterized protein (321 aa).

An ATP-binding site is contributed by 28–35; sequence GPINSGKT.

Belongs to the archaeal ATPase family.

This is an uncharacterized protein from Pyrococcus horikoshii (strain ATCC 700860 / DSM 12428 / JCM 9974 / NBRC 100139 / OT-3).